A 442-amino-acid chain; its full sequence is tRNA-2-methylthio-N(6)-dimethylallyladenosine synthase (442 aa).

In terms of domain architecture, MTTase N-terminal spans K2–T120. [4Fe-4S] cluster-binding residues include C11, C49, C83, C157, C161, and C164. Positions R143–R375 constitute a Radical SAM core domain. The TRAM domain occupies Q378 to E441.

It belongs to the methylthiotransferase family. MiaB subfamily. As to quaternary structure, monomer. It depends on [4Fe-4S] cluster as a cofactor.

It is found in the cytoplasm. It catalyses the reaction N(6)-dimethylallyladenosine(37) in tRNA + (sulfur carrier)-SH + AH2 + 2 S-adenosyl-L-methionine = 2-methylsulfanyl-N(6)-dimethylallyladenosine(37) in tRNA + (sulfur carrier)-H + 5'-deoxyadenosine + L-methionine + A + S-adenosyl-L-homocysteine + 2 H(+). Its function is as follows. Catalyzes the methylthiolation of N6-(dimethylallyl)adenosine (i(6)A), leading to the formation of 2-methylthio-N6-(dimethylallyl)adenosine (ms(2)i(6)A) at position 37 in tRNAs that read codons beginning with uridine. The polypeptide is tRNA-2-methylthio-N(6)-dimethylallyladenosine synthase (Neisseria meningitidis serogroup A / serotype 4A (strain DSM 15465 / Z2491)).